The following is a 375-amino-acid chain: uncharacterized protein (375 aa).

The protein belongs to the IMPDH/GMPR family.

This is an uncharacterized protein from Mycobacterium tuberculosis (strain CDC 1551 / Oshkosh).